Consider the following 343-residue polypeptide: Ribosomal RNA small subunit methyltransferase C (343 aa).

It belongs to the methyltransferase superfamily. RsmC family. In terms of assembly, monomer.

The protein resides in the cytoplasm. It catalyses the reaction guanosine(1207) in 16S rRNA + S-adenosyl-L-methionine = N(2)-methylguanosine(1207) in 16S rRNA + S-adenosyl-L-homocysteine + H(+). In terms of biological role, specifically methylates the guanine in position 1207 of 16S rRNA in the 30S particle. This Escherichia coli (strain ATCC 8739 / DSM 1576 / NBRC 3972 / NCIMB 8545 / WDCM 00012 / Crooks) protein is Ribosomal RNA small subunit methyltransferase C.